The primary structure comprises 173 residues: Protein FAM180A (173 aa).

Residues methionine 1–alanine 17 form the signal peptide.

This sequence belongs to the FAM180 family.

It localises to the secreted. This chain is Protein FAM180A (Fam180a), found in Mus musculus (Mouse).